A 1394-amino-acid polypeptide reads, in one-letter code: DNA-directed RNA polymerase subunit beta' (1394 aa).

The Zn(2+) site is built by C70, C72, C85, and C88. 3 residues coordinate Mg(2+): D470, D472, and D474. Zn(2+)-binding residues include C815, C889, C896, and C899.

It belongs to the RNA polymerase beta' chain family. The RNAP catalytic core consists of 2 alpha, 1 beta, 1 beta' and 1 omega subunit. When a sigma factor is associated with the core the holoenzyme is formed, which can initiate transcription. The cofactor is Mg(2+). It depends on Zn(2+) as a cofactor.

The enzyme catalyses RNA(n) + a ribonucleoside 5'-triphosphate = RNA(n+1) + diphosphate. DNA-dependent RNA polymerase catalyzes the transcription of DNA into RNA using the four ribonucleoside triphosphates as substrates. The polypeptide is DNA-directed RNA polymerase subunit beta' (Anaeromyxobacter sp. (strain K)).